Reading from the N-terminus, the 561-residue chain is Glucose-6-phosphate isomerase (561 aa).

Residue E366 is the Proton donor of the active site. Catalysis depends on residues H397 and K525.

The protein belongs to the GPI family.

Its subcellular location is the cytoplasm. It catalyses the reaction alpha-D-glucose 6-phosphate = beta-D-fructose 6-phosphate. The protein operates within carbohydrate degradation; glycolysis; D-glyceraldehyde 3-phosphate and glycerone phosphate from D-glucose: step 2/4. This chain is Glucose-6-phosphate isomerase (gpi), found in Dictyostelium discoideum (Social amoeba).